Consider the following 61-residue polypeptide: MKPAIFLMLFVAMFLISEGEGFKPKDAPQERSVFSPVVQSCPRCHRRDHFGKCRKLDPCPD.

A signal peptide spans 1–21; the sequence is MKPAIFLMLFVAMFLISEGEG. A propeptide spanning residues 22-31 is cleaved from the precursor; it reads FKPKDAPQER. P36 is subject to Hydroxyproline. Cystine bridges form between C41–C53 and C44–C59.

It belongs to the Hau1a/HC18/HC19 family.

It localises to the secreted. The protein resides in the nematocyst. Toxin that is lethal to crab. Does not produce the typical symptoms associated with sodium channel toxins in crabs, suggesting that it likely does not act on sodium channels. The protein is U-stichotoxin-Hcr1a of Radianthus crispa (Leathery sea anemone).